We begin with the raw amino-acid sequence, 466 residues long: UDP-N-acetylmuramoylalanine--D-glutamate ligase (466 aa).

An ATP-binding site is contributed by 121 to 127 (GTNGKST).

The protein belongs to the MurCDEF family.

The protein localises to the cytoplasm. The catalysed reaction is UDP-N-acetyl-alpha-D-muramoyl-L-alanine + D-glutamate + ATP = UDP-N-acetyl-alpha-D-muramoyl-L-alanyl-D-glutamate + ADP + phosphate + H(+). It participates in cell wall biogenesis; peptidoglycan biosynthesis. Cell wall formation. Catalyzes the addition of glutamate to the nucleotide precursor UDP-N-acetylmuramoyl-L-alanine (UMA). In Nitrobacter winogradskyi (strain ATCC 25391 / DSM 10237 / CIP 104748 / NCIMB 11846 / Nb-255), this protein is UDP-N-acetylmuramoylalanine--D-glutamate ligase.